A 292-amino-acid chain; its full sequence is Release factor glutamine methyltransferase (292 aa).

S-adenosyl-L-methionine contacts are provided by residues 126–130 (GTGTG), Asp157, Trp184, and Asn198. 198–201 (NPPY) contributes to the substrate binding site.

The protein belongs to the protein N5-glutamine methyltransferase family. PrmC subfamily.

It catalyses the reaction L-glutaminyl-[peptide chain release factor] + S-adenosyl-L-methionine = N(5)-methyl-L-glutaminyl-[peptide chain release factor] + S-adenosyl-L-homocysteine + H(+). Its function is as follows. Methylates the class 1 translation termination release factors RF1/PrfA and RF2/PrfB on the glutamine residue of the universally conserved GGQ motif. The chain is Release factor glutamine methyltransferase from Haemophilus influenzae (strain ATCC 51907 / DSM 11121 / KW20 / Rd).